A 165-amino-acid chain; its full sequence is MERLAIYPGTFDPFTNGHLDVLERALTIFDKVYIVLAENSKKSSLFTVDERCSMIREITASTSGVSVEVLHGGLLAEYAHSVGATAIVRGLRQVKDFEYEFQLSLLNRHLNPEVTTVFLMPNVKYTYVASSIIREVALLGGDVSKFVHPCVLAMLKKKYEEQNAQ.

Substrate is bound at residue Thr-10. Residues 10–11 (TF) and His-18 each bind ATP. Residues Lys-42, Leu-75, and Arg-89 each coordinate substrate. ATP is bound by residues 90–92 (GLR), Glu-100, and 125–131 (YTYVASS).

This sequence belongs to the bacterial CoaD family. As to quaternary structure, homohexamer. It depends on Mg(2+) as a cofactor.

The protein localises to the cytoplasm. The catalysed reaction is (R)-4'-phosphopantetheine + ATP + H(+) = 3'-dephospho-CoA + diphosphate. The protein operates within cofactor biosynthesis; coenzyme A biosynthesis; CoA from (R)-pantothenate: step 4/5. Reversibly transfers an adenylyl group from ATP to 4'-phosphopantetheine, yielding dephospho-CoA (dPCoA) and pyrophosphate. This is Phosphopantetheine adenylyltransferase from Chlorobium phaeobacteroides (strain BS1).